We begin with the raw amino-acid sequence, 231 residues long: Proteasome subunit alpha type-2 (231 aa).

It belongs to the peptidase T1A family. As to quaternary structure, the 26S proteasome consists of a 20S proteasome core and two 19S regulatory subunits. The 20S proteasome core is composed of 28 subunits that are arranged in four stacked rings, resulting in a barrel-shaped structure. The two end rings are each formed by seven alpha subunits, and the two central rings are each formed by seven beta subunits. The catalytic chamber with the active sites is on the inside of the barrel.

The protein localises to the cytoplasm. Its subcellular location is the nucleus. Functionally, the proteasome is a multicatalytic proteinase complex which is characterized by its ability to cleave peptides with Arg, Phe, Tyr, Leu, and Glu adjacent to the leaving group at neutral or slightly basic pH. The proteasome has an ATP-dependent proteolytic activity. This chain is Proteasome subunit alpha type-2 (pas-2), found in Caenorhabditis elegans.